The chain runs to 540 residues: Decreased expression in renal and prostate cancer protein (540 aa).

The span at 1–12 (MKEPRIFPRERP) shows a compositional bias: basic and acidic residues. Disordered regions lie at residues 1-264 (MKEP…DARA) and 304-389 (SQAS…AFSQ). Composition is skewed to low complexity over residues 113 to 125 (PRPGGLLGPSPGS) and 180 to 192 (GPSLRAGVLLTPG). Over residues 304 to 316 (SQASGNMGTSPSS) the composition is skewed to polar residues. S313 carries the phosphoserine modification. The span at 321–330 (PGPIGPNSGP) shows a compositional bias: low complexity. R375 is modified (asymmetric dimethylarginine). R403 carries the post-translational modification Omega-N-methylarginine. Position 439 is a phosphoserine (S439). Residues 516-540 (GTNPAAFPRPGGPMAAMYPNGMLPP) are disordered.

It belongs to the DERPC family.

Its subcellular location is the nucleus. In terms of biological role, potential tumor suppressor. This is Decreased expression in renal and prostate cancer protein from Bos taurus (Bovine).